The sequence spans 266 residues: Integral membrane protein 2B (266 aa).

The Cytoplasmic segment spans residues 1-54; the sequence is MVKVTFNSALAQKEAKKXEPKSGEEALIIPPDTXAVDCKDPDEVVPVGQRRAWC. The chain crosses the membrane as a helical; Signal-anchor for type II membrane protein span at residues 55-75; it reads WCMCFGLAFMLAGVILGGAYL. Residues 76-266 are Lumenal-facing; it reads YKYFALQPDD…KFAVETLICS (191 aa). Residues 102 to 134 are necessary for interaction with APP and inhibitor effects on APP processing; that stretch reads EPPANAPAARYQTIEENIKIFEEDGVEFISVPV. The 95-residue stretch at 137–231 folds into the BRICHOS domain; sequence FADSDPANIV…LCHDKETYKL (95 aa). Intrachain disulfides connect cysteine 164–cysteine 223 and cysteine 248–cysteine 265. Asparagine 170 carries an N-linked (GlcNAc...) asparagine glycan.

It belongs to the ITM2 family. Homodimer; disulfide-linked. Interacts with SPPL2A and SPPL2B. Interacts with APP. Mature BRI2 (mBRI2) interacts with the APP amyloid-beta A4 protein; the interaction occurs at the cell surface and in the endocytic compartments and enable alpha- and beta-secretase-induced APP cleavage inhibition. Mature BRI2 (mBRI2) interacts with the APP C99; the interaction occurs in the endocytic compartments and enable gamma-secretase-induced C99 cleavage inhibition. May form heterodimers with Bri23 peptide and APP amyloid-beta protein 40. Interacts with ADAM7 in sperm; the interaction increases following capacitation. The ectodomain C-terminal part of the imBRI2 is processed by furin producing a secreted Bri23 peptide and a mature BRI2, membrane form (mBRI2). The remaining part of the ectodomain of mBRI2 containing the BRICHOS domain is cleaved by ADAM10 and is secreted (BRI2C, soluble form). The membrane-bound N-terminal fragment (BRI2C, membrane form) is further proteolytically processed by SPPL2A and SPPL2B through regulated intramembrane proteolysis producing a secreted C-peptide and a BRI2 intracellular domain (BRI2 ICD) released in the cytosol. Shedding by ADAM10 facilitates intramembrane cleavage but is not absolutely required for BRI2 ICD generation. Post-translationally, glycosylation at Asn-170 is important for cell surface localization, but doesn't affect furin- and ADAM10-induced proteolytic processing.

It localises to the golgi apparatus membrane. The protein resides in the cell membrane. The protein localises to the endosome membrane. Its subcellular location is the secreted. In terms of biological role, plays a regulatory role in the processing of the amyloid-beta A4 precursor protein (APP) and acts as an inhibitor of the amyloid-beta peptide aggregation and fibrils deposition. Plays a role in the induction of neurite outgrowth. Functions as a protease inhibitor by blocking access of secretases to APP cleavage sites. Mature BRI2 (mBRI2) functions as a modulator of the amyloid-beta A4 precursor protein (APP) processing leading to a strong reduction in the secretion of secretase-processed amyloid-beta protein 40 and amyloid-beta protein 42. Functionally, bri23 peptide prevents aggregation of APP amyloid-beta protein 42 into toxic oligomers. This Sus scrofa (Pig) protein is Integral membrane protein 2B (ITM2B).